The primary structure comprises 264 residues: S-adenosylmethionine decarboxylase proenzyme (264 aa).

Ser-112 serves as the catalytic Schiff-base intermediate with substrate; via pyruvic acid. Position 112 is a pyruvic acid (Ser); by autocatalysis (Ser-112). His-117 (proton acceptor; for processing activity) is an active-site residue. The active-site Proton donor; for catalytic activity is Cys-140.

This sequence belongs to the prokaryotic AdoMetDC family. Type 2 subfamily. In terms of assembly, heterooctamer of four alpha and four beta chains arranged as a tetramer of alpha/beta heterodimers. Requires pyruvate as cofactor. In terms of processing, is synthesized initially as an inactive proenzyme. Formation of the active enzyme involves a self-maturation process in which the active site pyruvoyl group is generated from an internal serine residue via an autocatalytic post-translational modification. Two non-identical subunits are generated from the proenzyme in this reaction, and the pyruvate is formed at the N-terminus of the alpha chain, which is derived from the carboxyl end of the proenzyme. The post-translation cleavage follows an unusual pathway, termed non-hydrolytic serinolysis, in which the side chain hydroxyl group of the serine supplies its oxygen atom to form the C-terminus of the beta chain, while the remainder of the serine residue undergoes an oxidative deamination to produce ammonia and the pyruvoyl group blocking the N-terminus of the alpha chain.

The catalysed reaction is S-adenosyl-L-methionine + H(+) = S-adenosyl 3-(methylsulfanyl)propylamine + CO2. It functions in the pathway amine and polyamine biosynthesis; S-adenosylmethioninamine biosynthesis; S-adenosylmethioninamine from S-adenosyl-L-methionine: step 1/1. Catalyzes the decarboxylation of S-adenosylmethionine to S-adenosylmethioninamine (dcAdoMet), the propylamine donor required for the synthesis of the polyamines spermine and spermidine from the diamine putrescine. The chain is S-adenosylmethionine decarboxylase proenzyme from Escherichia coli O127:H6 (strain E2348/69 / EPEC).